The chain runs to 256 residues: F-actin-capping protein subunit alpha (256 aa).

S31 is modified (phosphoserine).

Belongs to the F-actin-capping protein alpha subunit family. Component of the F-actin capping complex, composed of a heterodimer of an alpha and a beta subunit.

The protein localises to the cytoplasm. It is found in the cytoskeleton. It localises to the actin patch. In terms of biological role, F-actin-capping proteins bind in a Ca(2+)-independent manner to the fast growing ends of actin filaments (barbed end) thereby blocking the exchange of subunits at these ends. Unlike other capping proteins (such as gelsolin and severin), these proteins do not sever actin filaments. Competes with formin cdc12 for attachment to the actin filaments barbed ends. Slowly replaces cdc12 on the barbed ends in preparation for filament disassembly during contractile ring constriction. The polypeptide is F-actin-capping protein subunit alpha (acp1) (Schizosaccharomyces pombe (strain 972 / ATCC 24843) (Fission yeast)).